Reading from the N-terminus, the 299-residue chain is Circadian clock oscillator protein KaiA (299 aa).

The interval 1 to 135 is psR domain, binds oxidized quinones; sequence MQSPLSLCLF…LHLGPICTLP (135 aa). One can recognise a KaiA N-terminal domain in the interval 1-169; the sequence is MQSPLSLCLF…RLADKLKERL (169 aa). The tract at residues 170–178 is flexible linker; the sequence is GYLGVYYKR. One can recognise a KaiA C-terminal domain in the interval 179 to 287; it reads KPSHFYRNFS…GEMYRRSIPR (109 aa).

The protein belongs to the KaiA family. In terms of assembly, homodimer. The KaiABC1 complex composition changes during the circadian cycle to control KaiC1 phosphorylation. Complexes KaiC1(6), KaiA(2-4):KaiC1(6), KaiB(6):KaiC1(6) and KaiC1(6):KaiB(6):KaiA(12) are among the most important forms, many form cooperatively. KaiA and CikA bind to the same region of the KaiB(fs) form and therefore compete. Interacts with KaiC1 but not KaiC2 or KaiC3. Interacts with itself, not seen to interact with other Kai proteins.

In terms of biological role, key component of the KaiABC oscillator complex, which constitutes the main circadian regulator in cyanobacteria. Complex composition changes during the circadian cycle to control KaiC phosphorylation. KaiA stimulates KaiC autophosphorylation, while KaiB sequesters KaiA, leading to KaiC autodephosphorylation. KaiA binding to the KaiC CII domain during the subjective day yields KaiA(2-4):KaiC(6) complexes which stimulate KaiC autophosphorylation. Phospho-Ser-431 KaiC accumulation triggers binding of KaiB during the subjective night to form the KaiB(6):KaiC(6) complex, leading to changes in the output regulators CikA and SasA. KaiB(6):KaiC(6) formation exposes a site for KaiA binding on KaiB that sequesters KaiA from KaiC's CII domain, making the KaiC(6):KaiB(6):KaiA(12) complex resulting in KaiC autodephosphorylation. Complete dephosphorylation of KaiC leads to dissociation of KaiA(2):KaiB(1), completing 1 cycle of the Kai oscillator. Functionally, component of the oscillator and circadian clock in this organism, enhances fitness in a rhythmic environment. Stimulates KaiC1 to autophosphorylate, has no effect on the kinase activity of KaiC2 or KaiC3. Its function is as follows. Binds oxidized quinones via the N-terminal PsR domain, allowing it to sense redox changes and possibly mediate clock input. This chain is Circadian clock oscillator protein KaiA, found in Synechocystis sp. (strain ATCC 27184 / PCC 6803 / Kazusa).